Consider the following 122-residue polypeptide: Large ribosomal subunit protein uL18 (122 aa).

Positions 1–24 (MSTLSRKQQTQKRHRRLRRHLSGT) are disordered. The span at 9-21 (QTQKRHRRLRRHL) shows a compositional bias: basic residues.

The protein belongs to the universal ribosomal protein uL18 family. Part of the 50S ribosomal subunit; part of the 5S rRNA/L5/L18/L25 subcomplex. Contacts the 5S and 23S rRNAs.

Functionally, this is one of the proteins that bind and probably mediate the attachment of the 5S RNA into the large ribosomal subunit, where it forms part of the central protuberance. This is Large ribosomal subunit protein uL18 from Synechococcus sp. (strain WH7803).